A 162-amino-acid chain; its full sequence is MDLEIYDKTQDGVPAEHVNLIQDVLQYAGKYLKLADNTEMSVTLMNNEDIHRINQQYRGVDRATDVISFAIEDDDEEAADFPLVMDDELAAEIPENIGDIFVSMDKVAEQADYLGHSYERELGFLVVHGFLHLNGYDHMEPEDEKVMFKLQADILDAYGLKR.

Zn(2+)-binding residues include H128, H132, and H138.

This sequence belongs to the endoribonuclease YbeY family. Requires Zn(2+) as cofactor.

The protein localises to the cytoplasm. Functionally, single strand-specific metallo-endoribonuclease involved in late-stage 70S ribosome quality control and in maturation of the 3' terminus of the 16S rRNA. This is Endoribonuclease YbeY from Levilactobacillus brevis (strain ATCC 367 / BCRC 12310 / CIP 105137 / JCM 1170 / LMG 11437 / NCIMB 947 / NCTC 947) (Lactobacillus brevis).